The chain runs to 764 residues: Polyribonucleotide nucleotidyltransferase (764 aa).

The Mg(2+) site is built by Asp-541 and Asp-547. In terms of domain architecture, KH spans 607-666 (PRVTAIKIPVDKIGEVIGPKGKVINQITEDTGANISIEDDGTVFVGATDGPSAQAAIDAI). One can recognise an S1 motif domain in the interval 678 to 747 (GERFLGTVVK…NRGKISLVPV (70 aa)).

The protein belongs to the polyribonucleotide nucleotidyltransferase family. Requires Mg(2+) as cofactor.

It is found in the cytoplasm. The enzyme catalyses RNA(n+1) + phosphate = RNA(n) + a ribonucleoside 5'-diphosphate. Involved in mRNA degradation. Catalyzes the phosphorolysis of single-stranded polyribonucleotides processively in the 3'- to 5'-direction. This Nocardia farcinica (strain IFM 10152) protein is Polyribonucleotide nucleotidyltransferase.